The chain runs to 92 residues: Probable Fe(2+)-trafficking protein (92 aa).

The protein belongs to the Fe(2+)-trafficking protein family.

Its function is as follows. Could be a mediator in iron transactions between iron acquisition and iron-requiring processes, such as synthesis and/or repair of Fe-S clusters in biosynthetic enzymes. The sequence is that of Probable Fe(2+)-trafficking protein from Xanthomonas campestris pv. campestris (strain 8004).